The following is a 968-amino-acid chain: RNA polymerase-associated protein RapA (968 aa).

Positions 164-334 constitute a Helicase ATP-binding domain; sequence DVGRRHAPRV…FARLRLLDPN (171 aa). Residue 177–184 participates in ATP binding; that stretch reads DEVGLGKT. Residues 280–283 carry the DEAH box motif; sequence DEAH. Residues 490 to 662 enclose the Helicase C-terminal domain; the sequence is RVEWLMGYLT…YLASPDQTEG (173 aa).

Belongs to the SNF2/RAD54 helicase family. RapA subfamily. As to quaternary structure, interacts with the RNAP. Has a higher affinity for the core RNAP than for the holoenzyme. Its ATPase activity is stimulated by binding to RNAP.

In terms of biological role, transcription regulator that activates transcription by stimulating RNA polymerase (RNAP) recycling in case of stress conditions such as supercoiled DNA or high salt concentrations. Probably acts by releasing the RNAP, when it is trapped or immobilized on tightly supercoiled DNA. Does not activate transcription on linear DNA. Probably not involved in DNA repair. The protein is RNA polymerase-associated protein RapA of Shigella boydii serotype 18 (strain CDC 3083-94 / BS512).